A 98-amino-acid polypeptide reads, in one-letter code: Putative defensin-like protein 239 (98 aa).

The first 23 residues, 1-23 (MRYTTSFIGLCFLIFLLKNLVNG), serve as a signal peptide directing secretion. 4 disulfide bridges follow: Cys-29-Cys-89, Cys-39-Cys-69, Cys-47-Cys-86, and Cys-67-Cys-88.

The protein belongs to the DEFL family.

Its subcellular location is the secreted. The polypeptide is Putative defensin-like protein 239 (SCRL17) (Arabidopsis thaliana (Mouse-ear cress)).